A 401-amino-acid chain; its full sequence is Putative TRAP transporter large permease protein HI_0050 (401 aa).

The next 11 membrane-spanning stretches (helical) occupy residues 31–51 (FPLM…HGGI), 70–90 (LGYV…SAVA), 115–135 (GLIC…PMII), 144–164 (ITKL…GLWV), 193–213 (AFWP…GIFT), 217–237 (AGVV…GLTF), 253–273 (MVMF…VAQI), 290–310 (ILMF…DLIP), 330–350 (IAYF…TPPV), 353–373 (VLYV…KGIA), and 375–395 (FLFV…IVIV).

This sequence belongs to the TRAP transporter large permease family.

The protein localises to the cell inner membrane. In Haemophilus influenzae (strain ATCC 51907 / DSM 11121 / KW20 / Rd), this protein is Putative TRAP transporter large permease protein HI_0050.